Consider the following 493-residue polypeptide: Amphoterin-induced protein 1 (493 aa).

The N-terminal stretch at Met1–Ala27 is a signal peptide. One can recognise an LRRNT domain in the interval Gly28–Ser61. Over Gly28–Thr372 the chain is Extracellular. Intrachain disulfides connect Cys34-Cys40 and Cys38-Cys47. LRR repeat units follow at residues Tyr62 to Thr83, Gln87 to Pro108, Asn111 to Asp132, Val135 to Asp156, Gln159 to Lys179, and Lys186 to Gln206. A glycan (N-linked (GlcNAc...) asparagine) is linked at Asn72. One can recognise an LRRCT domain in the interval Asn221–Glu272. 3 disulfide bridges follow: Cys225–Cys253, Cys227–Cys270, and Cys290–Cys341. Asn264, Asn315, Asn349, and Asn360 each carry an N-linked (GlcNAc...) asparagine glycan. In terms of domain architecture, Ig-like C2-type spans Asn269–Ser353. The helical transmembrane segment at Ala373–Leu393 threads the bilayer. Residues Thr394 to Val493 lie on the Cytoplasmic side of the membrane. The tract at residues Lys405–Val493 is disordered. The span at Ser408 to Asn424 shows a compositional bias: polar residues. The segment covering Gly431 to Ala442 has biased composition (basic and acidic residues). Ser477 and Ser481 each carry phosphoserine.

Belongs to the immunoglobulin superfamily. AMIGO family. As to quaternary structure, homodimer, and heterodimer with AMIGO2 and AMIGO3. Interacts with KCNB1.

It localises to the cell membrane. It is found in the perikaryon. The protein resides in the cell projection. Its subcellular location is the dendrite. The protein localises to the axon. In terms of biological role, promotes growth and fasciculation of neurites from cultured hippocampal neurons. May be involved in fasciculation as well as myelination of developing neural axons. May have a role in regeneration as well as neural plasticity in the adult nervous system. May mediate homophilic as well as heterophilic cell-cell interaction and contribute to signal transduction through its intracellular domain. Assembled with KCNB1 modulates the gating characteristics of the delayed rectifier voltage-dependent potassium channel KCNB1. This chain is Amphoterin-induced protein 1, found in Homo sapiens (Human).